We begin with the raw amino-acid sequence, 153 residues long: Small ribosomal subunit protein uS5 (153 aa).

One can recognise an S5 DRBM domain in the interval Phe-15–Val-78.

Belongs to the universal ribosomal protein uS5 family. In terms of assembly, part of the 30S ribosomal subunit. Contacts proteins S4 and S8.

With S4 and S12 plays an important role in translational accuracy. In terms of biological role, located at the back of the 30S subunit body where it stabilizes the conformation of the head with respect to the body. This chain is Small ribosomal subunit protein uS5, found in Helicobacter acinonychis (strain Sheeba).